The sequence spans 580 residues: tRNA-guanine(15) transglycosylase (580 aa).

D91 (nucleophile) is an active-site residue. Positions 126 and 192 each coordinate substrate. C275, C277, and C280 together coordinate Zn(2+). In terms of domain architecture, PUA spans 504–579 (RMRVVVDEDA…LAVKVRRGVE (76 aa)).

Belongs to the archaeosine tRNA-ribosyltransferase family. Requires Zn(2+) as cofactor.

It catalyses the reaction guanosine(15) in tRNA + 7-cyano-7-deazaguanine = 7-cyano-7-carbaguanosine(15) in tRNA + guanine. The protein operates within tRNA modification; archaeosine-tRNA biosynthesis. Exchanges the guanine residue with 7-cyano-7-deazaguanine (preQ0) at position 15 in the dihydrouridine loop (D-loop) of archaeal tRNAs. This chain is tRNA-guanine(15) transglycosylase, found in Thermococcus onnurineus (strain NA1).